The primary structure comprises 89 residues: Phosphocarrier protein HPr (89 aa).

In terms of domain architecture, HPr spans 1–88; it reads MLKQSIEIIN…DLINGYFGEG (88 aa). The active-site Pros-phosphohistidine intermediate is H15. Phosphoserine; by HPrK/P is present on S46.

This sequence belongs to the HPr family.

It is found in the cytoplasm. With respect to regulation, phosphorylation on Ser-46 inhibits the phosphoryl transfer from enzyme I to HPr. Its function is as follows. General (non sugar-specific) component of the phosphoenolpyruvate-dependent sugar phosphotransferase system (sugar PTS). This major carbohydrate active-transport system catalyzes the phosphorylation of incoming sugar substrates concomitantly with their translocation across the cell membrane. The phosphoryl group from phosphoenolpyruvate (PEP) is transferred to the phosphoryl carrier protein HPr by enzyme I. Phospho-HPr then transfers it to the PTS EIIA domain. This Neisseria meningitidis serogroup A / serotype 4A (strain DSM 15465 / Z2491) protein is Phosphocarrier protein HPr (ptsH).